Here is a 167-residue protein sequence, read N- to C-terminus: G/U mismatch-specific DNA glycosylase (167 aa).

This sequence belongs to the uracil-DNA glycosylase (UDG) superfamily. TDG/mug family. Binds DNA as a monomer.

It localises to the cytoplasm. It catalyses the reaction Specifically hydrolyzes mismatched double-stranded DNA and polynucleotides, releasing free uracil.. Its function is as follows. Excises ethenocytosine and uracil, which can arise by alkylation or deamination of cytosine, respectively, from the corresponding mispairs with guanine in ds-DNA. It is capable of hydrolyzing the carbon-nitrogen bond between the sugar-phosphate backbone of the DNA and the mispaired base. The complementary strand guanine functions in substrate recognition. Required for DNA damage lesion repair in stationary-phase cells. This is G/U mismatch-specific DNA glycosylase from Pectobacterium atrosepticum (strain SCRI 1043 / ATCC BAA-672) (Erwinia carotovora subsp. atroseptica).